The following is a 655-amino-acid chain: Methyl-accepting chemotaxis protein McpC (655 aa).

Residues 1–8 are Cytoplasmic-facing; that stretch reads MFKKLHMK. Residues 9 to 29 form a helical membrane-spanning segment; it reads IAVFVSIMLIITVVLLMLSSY. The Extracellular portion of the chain corresponds to 30 to 276; it reads LTLKPMITED…LMWISDKMNR (247 aa). The 78-residue stretch at 148 to 225 folds into the Cache domain; the sequence is WTEPYKDVVT…SNQGKNISKD (78 aa). A helical membrane pass occupies residues 277–297; the sequence is ANLWISLIALIITIILSYFLA. In terms of domain architecture, HAMP spans 298–350; that stretch reads KTITGPIQQLIVKTKAVSAGDLTVRAESKSKDEVGILTRDFNLMVENMKEMVE. Residues 298 to 655 are Cytoplasmic-facing; the sequence is KTITGPIQQL…LMNTIAKFTL (358 aa). Positions 369–619 constitute a Methyl-accepting transducer domain; it reads VAAETNETSG…ESAAAAEEVN (251 aa).

It belongs to the methyl-accepting chemotaxis (MCP) protein family. As to quaternary structure, interacts with FloT. Post-translationally, some glutamine residues are deamidated to glutamate by CheD and subsequently methylated.

It localises to the cell membrane. The protein localises to the membrane raft. Its function is as follows. Chemotactic-signal transducers respond to changes in the concentration of attractants and repellents in the environment, transduce a signal from the outside to the inside of the cell, and facilitate sensory adaptation through the variation of the level of methylation. All amino acids serve as attractants in B.subtilis, they appear to cause an increase in the turnover methyl groups, leading to methylation of an unidentified acceptor, while repellents have been shown to cause a decrease in methyl group turnover. The methyl groups are added by a methyltransferase and removed by a methylesterase. McpC is required for taxis to cysteine, proline, threonine, glycine, serine, lysine, valine and arginine and for aspartate, glutamine, histidine and glutamate. Primarily mediates response to positive stimulus of PTS carbohydrates. Greatly influences the duration or magnitude of the response to negative PTS carbohydrate stimulus. This chain is Methyl-accepting chemotaxis protein McpC (mcpC), found in Bacillus subtilis (strain 168).